The sequence spans 165 residues: Peptide methionine sulfoxide reductase MsrA (165 aa).

Residue Cys10 is part of the active site.

The protein belongs to the MsrA Met sulfoxide reductase family.

The enzyme catalyses L-methionyl-[protein] + [thioredoxin]-disulfide + H2O = L-methionyl-(S)-S-oxide-[protein] + [thioredoxin]-dithiol. The catalysed reaction is [thioredoxin]-disulfide + L-methionine + H2O = L-methionine (S)-S-oxide + [thioredoxin]-dithiol. Its function is as follows. Has an important function as a repair enzyme for proteins that have been inactivated by oxidation. Catalyzes the reversible oxidation-reduction of methionine sulfoxide in proteins to methionine. The sequence is that of Peptide methionine sulfoxide reductase MsrA from Campylobacter jejuni subsp. jejuni serotype O:23/36 (strain 81-176).